The primary structure comprises 69 residues: uncharacterized protein (69 aa).

Over 1–15 (MLLYIVIIVACIISK) the chain is Cytoplasmic. Residues 16 to 36 (LVPNEYWAIHLFFIIMIFMVY) form a helical membrane-spanning segment. Topologically, residues 37 to 69 (MYKKLDIHQKYQFWNYTMSGLSGHNVQVTCKCY) are extracellular. Asn51 is a glycosylation site (N-linked (GlcNAc...) asparagine; by host).

The protein belongs to the asfivirus X69R family.

The protein resides in the host membrane. This is an uncharacterized protein from African swine fever virus (isolate Tick/Malawi/Lil 20-1/1983) (ASFV).